The sequence spans 393 residues: uncharacterized protein (393 aa).

4 residues coordinate [4Fe-4S] cluster: Cys72, Cys82, Cys85, and Cys160. Positions 215, 245, 267, and 313 each coordinate S-adenosyl-L-methionine. The Nucleophile role is filled by Cys340.

This sequence belongs to the class I-like SAM-binding methyltransferase superfamily. RNA M5U methyltransferase family.

This is an uncharacterized protein from Nitrosomonas europaea (strain ATCC 19718 / CIP 103999 / KCTC 2705 / NBRC 14298).